A 76-amino-acid polypeptide reads, in one-letter code: Putative snRNP Sm-like protein (76 aa).

A Sm domain is found at 4–76; sequence RPLDVIHKSL…VLALSPVELE (73 aa).

Belongs to the snRNP Sm proteins family.

The sequence is that of Putative snRNP Sm-like protein from Thermococcus kodakarensis (strain ATCC BAA-918 / JCM 12380 / KOD1) (Pyrococcus kodakaraensis (strain KOD1)).